Here is a 348-residue protein sequence, read N- to C-terminus: NADH-quinone oxidoreductase subunit H (348 aa).

8 consecutive transmembrane segments (helical) span residues 21 to 41 (IIGI…IIYA), 87 to 107 (GLFL…WAVI), 120 to 140 (IGLL…IIAG), 166 to 186 (IGFV…SAIV), 193 to 213 (IFGF…AVVF), 258 to 278 (NVIL…LPPV), 283 to 303 (LYMV…FFVF), and 323 to 343 (WKVF…WLML).

This sequence belongs to the complex I subunit 1 family. NDH-1 is composed of 14 different subunits. Subunits NuoA, H, J, K, L, M, N constitute the membrane sector of the complex.

It localises to the cell inner membrane. It carries out the reaction a quinone + NADH + 5 H(+)(in) = a quinol + NAD(+) + 4 H(+)(out). NDH-1 shuttles electrons from NADH, via FMN and iron-sulfur (Fe-S) centers, to quinones in the respiratory chain. The immediate electron acceptor for the enzyme in this species is believed to be ubiquinone. Couples the redox reaction to proton translocation (for every two electrons transferred, four hydrogen ions are translocated across the cytoplasmic membrane), and thus conserves the redox energy in a proton gradient. This subunit may bind ubiquinone. The sequence is that of NADH-quinone oxidoreductase subunit H from Rhizorhabdus wittichii (strain DSM 6014 / CCUG 31198 / JCM 15750 / NBRC 105917 / EY 4224 / RW1) (Sphingomonas wittichii).